A 551-amino-acid chain; its full sequence is MYCVQCEQTMVTPMGNGCSFGQGMCGKTAETSDLQDLLIACLHSLSAWALKAREHGIINHDADNFAPRAFFATLTNVNFDSNRIVGYAQQAIIYRNELIKAISEVEPNPELNHPLAHIELKGISIDQLAEQAKEFALDTDRAEIGEEVHGVRLLALYGLKGAAAYLEHAYVLGKFDNDLYVEYHGFMAWLGTKPSDLNELLEKSLAIGSMNFKVMAMLDAGETETFGNPVPATVNIRPVKGKCILISGHDLKDLKELLEQTEGKGINVYTHGEMLPAHGYPELKKYKHLVGNYGSGWQNQQKEFARFPGAIVMTSNCLIDPNVGDYADRIFTCNIVGWPGVVHLEKHNFAPVIEKALECDGFPYTELEHYITVGFGRKTLIDASDAVIDLVKAGKLSHVFVIGGCDGDKEERHYYTDLAYALPKDTAVLTLGCGKYRFNKLDFGTIDGGLPRLLDAGQCNDTYSAIMLAVTLSQKLGIGLNELPLSIVLSWFEQKAIIVLLTLLALGVKNVYSGPSKPAFLNDNVMNLLHEKFGLSGLTTPEQDFGHIINK.

Residues C3, C6, C18, and C25 each contribute to the [2Fe-2S] cluster site. Residues H249, E273, C317, C405, C433, C459, E493, and K495 each contribute to the hybrid [4Fe-2O-2S] cluster site. The residue at position 405 (C405) is a Cysteine persulfide.

The protein belongs to the HCP family. [2Fe-2S] cluster serves as cofactor. Requires hybrid [4Fe-2O-2S] cluster as cofactor.

Its subcellular location is the cytoplasm. The catalysed reaction is A + NH4(+) + H2O = hydroxylamine + AH2 + H(+). Catalyzes the reduction of hydroxylamine to form NH(3) and H(2)O. In Actinobacillus pleuropneumoniae serotype 5b (strain L20), this protein is Hydroxylamine reductase.